The primary structure comprises 151 residues: uncharacterized protein (151 aa).

To B.subtilis pcf and to sigma factors.

This is an uncharacterized protein from Bacillus subtilis (strain 168).